The following is a 430-amino-acid chain: Long-chain specific acyl-CoA dehydrogenase, mitochondrial (430 aa).

The N-terminal 30 residues, 1-30, are a transit peptide targeting the mitochondrion; it reads MAARLLLRSLRVLKARSAPRPPPSARCSHS. The disordered stretch occupies residues 17–39; it reads SAPRPPPSARCSHSGAEARLETP. At Lys-42 the chain carries N6-acetyllysine. Phosphoserine is present on residues Ser-54 and Ser-55. Residues Lys-66 and Lys-81 each carry the N6-acetyllysine; alternate modification. N6-succinyllysine; alternate is present on residues Lys-66 and Lys-81. Residues Lys-92 and Lys-95 each carry the N6-acetyllysine modification. Position 165 is an N6-succinyllysine (Lys-165). FAD is bound at residue 170 to 179; that stretch reads IAMTEPGAGS. Position 179 (Ser-179) interacts with substrate. Ser-191 is subject to Phosphoserine. 203-205 is a binding site for FAD; the sequence is FIT. 227–228 serves as a coordination point for substrate; sequence AH. Lys-240 carries the post-translational modification N6-succinyllysine. N6-acetyllysine; alternate is present on residues Lys-254 and Lys-279. N6-succinyllysine; alternate occurs at positions 254 and 279. Substrate contacts are provided by residues Tyr-282 and 289–292; that span reads PQER. Residue Glu-291 is the Proton acceptor of the active site. Arg-317 is an FAD binding site. Lys-318 is subject to N6-acetyllysine. Lys-322 carries the N6-acetyllysine; alternate modification. Position 322 is an N6-succinyllysine; alternate (Lys-322). Gln-328 provides a ligand contact to FAD. Lys-358 carries the post-translational modification N6-acetyllysine. A Phosphoserine modification is found at Ser-362. FAD is bound at residue 385 to 389; it reads QLHGG. 412-413 provides a ligand contact to substrate; it reads GG. 414–416 is a binding site for FAD; that stretch reads TNE.

Belongs to the acyl-CoA dehydrogenase family. Homotetramer. Requires FAD as cofactor. Acetylation at Lys-318 and Lys-322 in proximity of the cofactor-binding sites strongly reduces catalytic activity. These sites are deacetylated by SIRT3. In terms of tissue distribution, expressed in heart, skeletal muscle, kidney, and brain. Expressed in liver (at protein level).

The protein localises to the mitochondrion matrix. The enzyme catalyses a long-chain 2,3-saturated fatty acyl-CoA + oxidized [electron-transfer flavoprotein] + H(+) = a long-chain (2E)-enoyl-CoA + reduced [electron-transfer flavoprotein]. The catalysed reaction is oxidized [electron-transfer flavoprotein] + hexadecanoyl-CoA + H(+) = (2E)-hexadecenoyl-CoA + reduced [electron-transfer flavoprotein]. It catalyses the reaction hexanoyl-CoA + oxidized [electron-transfer flavoprotein] + H(+) = (2E)-hexenoyl-CoA + reduced [electron-transfer flavoprotein]. It carries out the reaction octanoyl-CoA + oxidized [electron-transfer flavoprotein] + H(+) = (2E)-octenoyl-CoA + reduced [electron-transfer flavoprotein]. The enzyme catalyses decanoyl-CoA + oxidized [electron-transfer flavoprotein] + H(+) = (2E)-decenoyl-CoA + reduced [electron-transfer flavoprotein]. The catalysed reaction is dodecanoyl-CoA + oxidized [electron-transfer flavoprotein] + H(+) = (2E)-dodecenoyl-CoA + reduced [electron-transfer flavoprotein]. It catalyses the reaction tetradecanoyl-CoA + oxidized [electron-transfer flavoprotein] + H(+) = (2E)-tetradecenoyl-CoA + reduced [electron-transfer flavoprotein]. It carries out the reaction octadecanoyl-CoA + oxidized [electron-transfer flavoprotein] + H(+) = (2E)-octadecenoyl-CoA + reduced [electron-transfer flavoprotein]. The enzyme catalyses eicosanoyl-CoA + oxidized [electron-transfer flavoprotein] + H(+) = (2E)-eicosenoyl-CoA + reduced [electron-transfer flavoprotein]. The catalysed reaction is docosanoyl-CoA + oxidized [electron-transfer flavoprotein] + H(+) = (2E)-docosenoyl-CoA + reduced [electron-transfer flavoprotein]. It catalyses the reaction tetracosanoyl-CoA + oxidized [electron-transfer flavoprotein] + H(+) = (2E)-tetracosenoyl-CoA + reduced [electron-transfer flavoprotein]. It carries out the reaction (5E)-tetradecenoyl-CoA + oxidized [electron-transfer flavoprotein] + H(+) = (2E,5E)-tetradecadienoyl-CoA + reduced [electron-transfer flavoprotein]. The enzyme catalyses (5Z)-tetradecenoyl-CoA + oxidized [electron-transfer flavoprotein] + H(+) = (2E,5Z)-tetradecadienoyl-CoA + reduced [electron-transfer flavoprotein]. The catalysed reaction is oxidized [electron-transfer flavoprotein] + (9Z)-octadecenoyl-CoA + H(+) = (2E,9Z)-octadecadienoyl-CoA + reduced [electron-transfer flavoprotein]. Its pathway is lipid metabolism; mitochondrial fatty acid beta-oxidation. Its function is as follows. Long-chain specific acyl-CoA dehydrogenase is one of the acyl-CoA dehydrogenases that catalyze the first step of mitochondrial fatty acid beta-oxidation, an aerobic process breaking down fatty acids into acetyl-CoA and allowing the production of energy from fats. The first step of fatty acid beta-oxidation consists in the removal of one hydrogen from C-2 and C-3 of the straight-chain fatty acyl-CoA thioester, resulting in the formation of trans-2-enoyl-CoA. Among the different mitochondrial acyl-CoA dehydrogenases, long-chain specific acyl-CoA dehydrogenase can act on saturated and unsaturated acyl-CoAs with 6 to 24 carbons with a preference for 8 to 18 carbons long primary chains. The protein is Long-chain specific acyl-CoA dehydrogenase, mitochondrial of Mus musculus (Mouse).